Here is a 283-residue protein sequence, read N- to C-terminus: Urease accessory protein UreD (283 aa).

Residues 1-20 (MTQTQPVGTLRLTIDDQGPQ) form a disordered region.

Belongs to the UreD family. As to quaternary structure, ureD, UreF and UreG form a complex that acts as a GTP-hydrolysis-dependent molecular chaperone, activating the urease apoprotein by helping to assemble the nickel containing metallocenter of UreC. The UreE protein probably delivers the nickel.

The protein resides in the cytoplasm. Functionally, required for maturation of urease via the functional incorporation of the urease nickel metallocenter. The chain is Urease accessory protein UreD from Corynebacterium glutamicum (strain R).